Here is a 21-residue protein sequence, read N- to C-terminus: Short neurotoxin E1 (21 aa).

Residues M1 to Q21 are disordered.

Contains 4 disulfide bonds. As to expression, expressed by the venom gland.

Its subcellular location is the secreted. In terms of biological role, binds to muscle nicotinic acetylcholine receptor (nAChR) and inhibit acetylcholine from binding to the receptor, thereby impairing neuromuscular transmission. The protein is Short neurotoxin E1 of Micrurus pyrrhocryptus (Coral snake).